The primary structure comprises 418 residues: Queuine tRNA-ribosyltransferase accessory subunit 2 (418 aa).

Residues Cys325, Cys327, Cys330, and His356 each contribute to the Zn(2+) site.

It belongs to the queuine tRNA-ribosyltransferase family. QTRT2 subfamily. In terms of assembly, heterodimer of a catalytic subunit and an accessory subunit. Zn(2+) serves as cofactor.

Its subcellular location is the cytoplasm. Non-catalytic subunit of the queuine tRNA-ribosyltransferase (TGT) that catalyzes the base-exchange of a guanine (G) residue with queuine (Q) at position 34 (anticodon wobble position) in tRNAs with GU(N) anticodons (tRNA-Asp, -Asn, -His and -Tyr), resulting in the hypermodified nucleoside queuosine (7-(((4,5-cis-dihydroxy-2-cyclopenten-1-yl)amino)methyl)-7-deazaguanosine). The protein is Queuine tRNA-ribosyltransferase accessory subunit 2 of Drosophila erecta (Fruit fly).